Consider the following 71-residue polypeptide: Protein SlyX homolog (71 aa).

The protein belongs to the SlyX family.

In Rhodospirillum rubrum (strain ATCC 11170 / ATH 1.1.1 / DSM 467 / LMG 4362 / NCIMB 8255 / S1), this protein is Protein SlyX homolog.